The chain runs to 126 residues: Fluoride-specific ion channel FluC (126 aa).

Transmembrane regions (helical) follow at residues 4–24 (YLYI…VSGV), 35–55 (IGTF…TGLF), 67–87 (LLIL…MFES), and 100–120 (ALNI…GLAL). Positions 75 and 78 each coordinate Na(+).

This sequence belongs to the fluoride channel Fluc/FEX (TC 1.A.43) family.

The protein resides in the cell inner membrane. The enzyme catalyses fluoride(in) = fluoride(out). Its activity is regulated as follows. Na(+) is not transported, but it plays an essential structural role and its presence is essential for fluoride channel function. Its function is as follows. Fluoride-specific ion channel. Important for reducing fluoride concentration in the cell, thus reducing its toxicity. The chain is Fluoride-specific ion channel FluC from Maridesulfovibrio salexigens (strain ATCC 14822 / DSM 2638 / NCIMB 8403 / VKM B-1763) (Desulfovibrio salexigens).